Reading from the N-terminus, the 155-residue chain is Large ribosomal subunit protein uL22c (155 aa).

The protein belongs to the universal ribosomal protein uL22 family. Part of the 50S ribosomal subunit.

It localises to the plastid. It is found in the chloroplast. Functionally, this protein binds specifically to 23S rRNA. The globular domain of the protein is located near the polypeptide exit tunnel on the outside of the subunit, while an extended beta-hairpin is found that lines the wall of the exit tunnel in the center of the 70S ribosome. The protein is Large ribosomal subunit protein uL22c (rpl22) of Nicotiana sylvestris (Wood tobacco).